The sequence spans 594 residues: Protein HOTHEAD (594 aa).

The N-terminal stretch at 1-19 (MALKLFLFALLLCLPTSLS) is a signal peptide. Residue 64–91 (DYIVIGGGTAGCPLAATLSQNFSVLVLE) coordinates FAD. The active-site Proton acceptor is His529.

It belongs to the GMC oxidoreductase family. The cofactor is FAD. Expressed in roots, leaves, stems, inflorescences and siliques. Found not only in epidermis but also in all sub-epidermal cell layers.

Its function is as follows. Probable FAD-dependent enzyme. Involved in regulating post-genital organ fusion. Required to limit cellular interactions between contacting epidermal cells during floral development. The polypeptide is Protein HOTHEAD (HTH) (Arabidopsis thaliana (Mouse-ear cress)).